Here is a 1014-residue protein sequence, read N- to C-terminus: Klotho (1014 aa).

The N-terminal stretch at 1 to 34 (MPARAPPRRLPRLLLLRLLSLHLLLLTLRARCLS) is a signal peptide. Over 35–983 (AEPGQGAQTW…GCGFFQTRKS (949 aa)) the chain is Extracellular. Glycosyl hydrolase-1 regions lie at residues 59 to 508 (LHDT…NNGF) and 517 to 955 (LEGT…NNGF). N-linked (GlcNAc...) asparagine glycosylation is found at Asn-161, Asn-285, Asn-346, Asn-609, Asn-614, and Asn-696. Residues 984-1004 (LLAFISFLVFAFVTSLALIYY) traverse the membrane as a helical segment. Residues 1005–1014 (YSKKGRRRYK) lie on the Cytoplasmic side of the membrane.

Belongs to the glycosyl hydrolase 1 family. Klotho subfamily. Homodimer. Interacts with FGF23 and FGFR1. Post-translationally, N-glycosylated. In terms of tissue distribution, present in cortical renal tubules and the parathyroid (at protein level). Strongly expressed in kidney. Expressed at low levels in brain, lung, intestine and ovaries.

Its subcellular location is the cell membrane. The protein localises to the apical cell membrane. The protein resides in the secreted. It carries out the reaction a beta-D-glucuronoside + H2O = D-glucuronate + an alcohol. In terms of biological role, may have weak glycosidase activity towards glucuronylated steroids. However, it lacks essential active site Glu residues at positions 241 and 874, suggesting it may be inactive as a glycosidase in vivo. May be involved in the regulation of calcium and phosphorus homeostasis by inhibiting the synthesis of active vitamin D. Essential factor for the specific interaction between FGF23 and FGFR1. Functionally, the Klotho peptide generated by cleavage of the membrane-bound isoform may be an anti-aging circulating hormone which would extend life span by inhibiting insulin/IGF1 signaling. This Rattus norvegicus (Rat) protein is Klotho (Kl).